The chain runs to 180 residues: NADH-quinone oxidoreductase subunit I (180 aa).

2 4Fe-4S ferredoxin-type domains span residues 48–80 (IVLTRDPDGDERCVACNLCAVACPVDCISLQKA) and 90–119 (EFFRINFSRCIFCGLCEEACPTTAIQLTPD). Residues Cys-60, Cys-63, Cys-66, Cys-70, Cys-99, Cys-102, Cys-105, and Cys-109 each coordinate [4Fe-4S] cluster.

The protein belongs to the complex I 23 kDa subunit family. NDH-1 is composed of 13 different subunits. Subunits NuoA, H, J, K, L, M, N constitute the membrane sector of the complex. [4Fe-4S] cluster is required as a cofactor.

It localises to the cell inner membrane. It catalyses the reaction a quinone + NADH + 5 H(+)(in) = a quinol + NAD(+) + 4 H(+)(out). Functionally, NDH-1 shuttles electrons from NADH, via FMN and iron-sulfur (Fe-S) centers, to quinones in the respiratory chain. The immediate electron acceptor for the enzyme in this species is believed to be ubiquinone. Couples the redox reaction to proton translocation (for every two electrons transferred, four hydrogen ions are translocated across the cytoplasmic membrane), and thus conserves the redox energy in a proton gradient. This chain is NADH-quinone oxidoreductase subunit I, found in Sodalis glossinidius (strain morsitans).